A 551-amino-acid chain; its full sequence is Arginine--tRNA ligase (551 aa).

The 'HIGH' region motif lies at alanine 125–histidine 135.

It belongs to the class-I aminoacyl-tRNA synthetase family. Monomer.

It is found in the cytoplasm. It carries out the reaction tRNA(Arg) + L-arginine + ATP = L-arginyl-tRNA(Arg) + AMP + diphosphate. The sequence is that of Arginine--tRNA ligase from Nitratidesulfovibrio vulgaris (strain DP4) (Desulfovibrio vulgaris).